A 351-amino-acid chain; its full sequence is Histidinol-phosphate aminotransferase 1 (351 aa).

At K210 the chain carries N6-(pyridoxal phosphate)lysine.

This sequence belongs to the class-II pyridoxal-phosphate-dependent aminotransferase family. Histidinol-phosphate aminotransferase subfamily. Homodimer. Pyridoxal 5'-phosphate serves as cofactor.

The enzyme catalyses L-histidinol phosphate + 2-oxoglutarate = 3-(imidazol-4-yl)-2-oxopropyl phosphate + L-glutamate. The protein operates within amino-acid biosynthesis; L-histidine biosynthesis; L-histidine from 5-phospho-alpha-D-ribose 1-diphosphate: step 7/9. This is Histidinol-phosphate aminotransferase 1 (hisC1) from Pasteurella multocida (strain Pm70).